The following is a 331-amino-acid chain: Holliday junction branch migration complex subunit RuvB (331 aa).

The segment at 1–178 (MRNSIFEQEE…FGITLRLDFY (178 aa)) is large ATPase domain (RuvB-L). ATP is bound by residues Leu17, Arg18, Gly59, Lys62, Thr63, Thr64, 125–127 (EDY), Arg168, Tyr178, and Arg215. Position 63 (Thr63) interacts with Mg(2+). The segment at 179-249 (TVSELLQLLQ…FADLALNKME (71 aa)) is small ATPAse domain (RuvB-S). Residues 252–331 (QFGLDKLDYT…LSTINSARLP (80 aa)) form a head domain (RuvB-H) region. DNA contacts are provided by Arg307 and Arg312.

It belongs to the RuvB family. As to quaternary structure, homohexamer. Forms an RuvA(8)-RuvB(12)-Holliday junction (HJ) complex. HJ DNA is sandwiched between 2 RuvA tetramers; dsDNA enters through RuvA and exits via RuvB. An RuvB hexamer assembles on each DNA strand where it exits the tetramer. Each RuvB hexamer is contacted by two RuvA subunits (via domain III) on 2 adjacent RuvB subunits; this complex drives branch migration. In the full resolvosome a probable DNA-RuvA(4)-RuvB(12)-RuvC(2) complex forms which resolves the HJ.

It localises to the cytoplasm. The catalysed reaction is ATP + H2O = ADP + phosphate + H(+). Its function is as follows. The RuvA-RuvB-RuvC complex processes Holliday junction (HJ) DNA during genetic recombination and DNA repair, while the RuvA-RuvB complex plays an important role in the rescue of blocked DNA replication forks via replication fork reversal (RFR). RuvA specifically binds to HJ cruciform DNA, conferring on it an open structure. The RuvB hexamer acts as an ATP-dependent pump, pulling dsDNA into and through the RuvAB complex. RuvB forms 2 homohexamers on either side of HJ DNA bound by 1 or 2 RuvA tetramers; 4 subunits per hexamer contact DNA at a time. Coordinated motions by a converter formed by DNA-disengaged RuvB subunits stimulates ATP hydrolysis and nucleotide exchange. Immobilization of the converter enables RuvB to convert the ATP-contained energy into a lever motion, pulling 2 nucleotides of DNA out of the RuvA tetramer per ATP hydrolyzed, thus driving DNA branch migration. The RuvB motors rotate together with the DNA substrate, which together with the progressing nucleotide cycle form the mechanistic basis for DNA recombination by continuous HJ branch migration. Branch migration allows RuvC to scan DNA until it finds its consensus sequence, where it cleaves and resolves cruciform DNA. This Neorickettsia sennetsu (strain ATCC VR-367 / Miyayama) (Ehrlichia sennetsu) protein is Holliday junction branch migration complex subunit RuvB.